Reading from the N-terminus, the 612-residue chain is Dihydroxy-acid dehydratase (612 aa).

D81 contributes to the Mg(2+) binding site. Position 122 (C122) interacts with [2Fe-2S] cluster. 2 residues coordinate Mg(2+): D123 and K124. K124 is modified (N6-carboxylysine). Residue C193 coordinates [2Fe-2S] cluster. E489 contacts Mg(2+). The active-site Proton acceptor is the S515.

Belongs to the IlvD/Edd family. In terms of assembly, homodimer. It depends on [2Fe-2S] cluster as a cofactor. Mg(2+) serves as cofactor.

It carries out the reaction (2R)-2,3-dihydroxy-3-methylbutanoate = 3-methyl-2-oxobutanoate + H2O. The enzyme catalyses (2R,3R)-2,3-dihydroxy-3-methylpentanoate = (S)-3-methyl-2-oxopentanoate + H2O. It functions in the pathway amino-acid biosynthesis; L-isoleucine biosynthesis; L-isoleucine from 2-oxobutanoate: step 3/4. The protein operates within amino-acid biosynthesis; L-valine biosynthesis; L-valine from pyruvate: step 3/4. In terms of biological role, functions in the biosynthesis of branched-chain amino acids. Catalyzes the dehydration of (2R,3R)-2,3-dihydroxy-3-methylpentanoate (2,3-dihydroxy-3-methylvalerate) into 2-oxo-3-methylpentanoate (2-oxo-3-methylvalerate) and of (2R)-2,3-dihydroxy-3-methylbutanoate (2,3-dihydroxyisovalerate) into 2-oxo-3-methylbutanoate (2-oxoisovalerate), the penultimate precursor to L-isoleucine and L-valine, respectively. In Stutzerimonas stutzeri (strain A1501) (Pseudomonas stutzeri), this protein is Dihydroxy-acid dehydratase.